A 33-amino-acid polypeptide reads, in one-letter code: Zinc metalloproteinase-disintegrin-like moojenin (33 aa).

The region spanning 8 to 33 (PPVCGNELLEVGEECDCGTPENCQNE) is the Disintegrin domain. Positions 10, 13, 15, 17, 20, and 23 each coordinate Ca(2+). Cystine bridges form between cysteine 11–cysteine 30 and cysteine 24–cysteine 30.

This sequence belongs to the venom metalloproteinase (M12B) family. P-III subfamily. P-IIIb sub-subfamily. Monomer. The cofactor is Zn(2+). Post-translationally, the N-terminus (from the N-terminal region of the metalloproteinase domain) is blocked. In terms of tissue distribution, expressed by the venom gland.

It is found in the secreted. With respect to regulation, the fibrinogenolytic and coagulant activities of the moojenin were abolished by preincubation with EDTA, 1,10-phenanthroline and beta-mercaptoethanol. Metalloproteinase moojenin: snake venom metalloproteinase that cleaves both alpha- and beta-chains of fibrinogen, but not the gamma-chain. Shows a coagulant activity on bovine plasma about 3.1 fold lower than crude venom. Renders the blood incoagulable when intraperitoneally administered into mice. Induces necrosis in liver and muscle, but does not cause histological alterations in mouse lungs, kidney or heart. The polypeptide is Zinc metalloproteinase-disintegrin-like moojenin (Bothrops moojeni (Lance-headed viper)).